We begin with the raw amino-acid sequence, 616 residues long: FAD-linked oxidoreductase cheF (616 aa).

The FAD-binding PCMH-type domain occupies 160 to 344 (NQGLVSPWYV…LSMTVRVEPA (185 aa)).

Belongs to the oxygen-dependent FAD-linked oxidoreductase family. The cofactor is FAD.

It participates in secondary metabolite biosynthesis. In terms of biological role, FAD-linked oxidoreductase; part of the gene cluster that mediates the biosynthesis of chaetoglobosin A which has a unique inhibitory activity against actin polymerization in mammalian cells. Chaetoglobosin A and its intermediates are involved in the morphological differentiation of C.globosum. The first step of the pathway is the synthesis of prochaetoglobosin I via condensation of one acetyl-CoA, 8 malonyl-CoA, and a L-tryptophan molecule by the PKS-NRPS hybrid synthetase cheA, followed by reduction of backbone double bond to install desired geometry by the enoyl reductase cheB. Further multiple oxidation steps performed by the cytochrome P450 monooxygenases cheE and cheG, as well as by the FAD-linked oxidoreductase cheF, lead to the formation of chaetoglobosin A. Depending on the order of action of these reductases, distinct intermediates can be identified. Within the pathway, the cytochrome P450 monooxygenase cheE catalyzes a stereospecific epoxidation on prochaetoglobosin I, cytoglobosin D, and chaetoglobosin J intermediates. The FAD-linked oxidoreductase cheF performs dehydrogenation of the C-20 hydroxyl groups in the 20-dihyrochaetoglobosin A and cytoglobosin D intermediates. Finally, the cytochrome P450 monooxygenase cheG can catalyze the stereospecific dihydroxylation of prochaetoglobosin I and prochaetoglobosin IV at C-19 and C-20, respectively. The Diels-Alderase cheD may play a role in the post-PKS-NRPS biosynthetic steps catalyzing Diels-Alder cyclization. In Chaetomium globosum (strain ATCC 6205 / CBS 148.51 / DSM 1962 / NBRC 6347 / NRRL 1970) (Soil fungus), this protein is FAD-linked oxidoreductase cheF.